A 290-amino-acid chain; its full sequence is ATP synthase gamma chain (290 aa).

The protein belongs to the ATPase gamma chain family. In terms of assembly, F-type ATPases have 2 components, CF(1) - the catalytic core - and CF(0) - the membrane proton channel. CF(1) has five subunits: alpha(3), beta(3), gamma(1), delta(1), epsilon(1). CF(0) has three main subunits: a, b and c.

The protein localises to the cell membrane. In terms of biological role, produces ATP from ADP in the presence of a proton gradient across the membrane. The gamma chain is believed to be important in regulating ATPase activity and the flow of protons through the CF(0) complex. The sequence is that of ATP synthase gamma chain from Roseiflexus sp. (strain RS-1).